The chain runs to 196 residues: Holliday junction branch migration complex subunit RuvA (196 aa).

The interval 1–63 (MINKIYGKIV…DDDVKLFGFL (63 aa)) is domain I. The interval 64 to 142 (NISEREVFEN…KGDESSSYML (79 aa)) is domain II. Residue lysine 143 is a region of interest, flexible linker. The tract at residues 143–196 (KFKELEQSIVNMGFDRKLVVVAFREIMLSDKFLILKEAEQEQFLFTETLKRLSV) is domain III.

It belongs to the RuvA family. In terms of assembly, homotetramer. Forms an RuvA(8)-RuvB(12)-Holliday junction (HJ) complex. HJ DNA is sandwiched between 2 RuvA tetramers; dsDNA enters through RuvA and exits via RuvB. An RuvB hexamer assembles on each DNA strand where it exits the tetramer. Each RuvB hexamer is contacted by two RuvA subunits (via domain III) on 2 adjacent RuvB subunits; this complex drives branch migration. In the full resolvosome a probable DNA-RuvA(4)-RuvB(12)-RuvC(2) complex forms which resolves the HJ.

The protein resides in the cytoplasm. Its function is as follows. The RuvA-RuvB-RuvC complex processes Holliday junction (HJ) DNA during genetic recombination and DNA repair, while the RuvA-RuvB complex plays an important role in the rescue of blocked DNA replication forks via replication fork reversal (RFR). RuvA specifically binds to HJ cruciform DNA, conferring on it an open structure. The RuvB hexamer acts as an ATP-dependent pump, pulling dsDNA into and through the RuvAB complex. HJ branch migration allows RuvC to scan DNA until it finds its consensus sequence, where it cleaves and resolves the cruciform DNA. This is Holliday junction branch migration complex subunit RuvA from Borrelia recurrentis (strain A1).